We begin with the raw amino-acid sequence, 200 residues long: Proteasome subunit beta 2 (200 aa).

Positions Met-1–Gly-7 are cleaved as a propeptide — removed in mature form; by autocatalysis. The active-site Nucleophile is Thr-8.

The protein belongs to the peptidase T1B family. In terms of assembly, the 20S proteasome core is composed of 14 alpha and 14 beta subunits that assemble into four stacked heptameric rings, resulting in a barrel-shaped structure. The two inner rings, each composed of seven catalytic beta subunits, are sandwiched by two outer rings, each composed of seven alpha subunits. The catalytic chamber with the active sites is on the inside of the barrel. Has a gated structure, the ends of the cylinder being occluded by the N-termini of the alpha-subunits. Is capped at one or both ends by the proteasome regulatory ATPase, PAN.

The protein localises to the cytoplasm. It catalyses the reaction Cleavage of peptide bonds with very broad specificity.. With respect to regulation, the formation of the proteasomal ATPase PAN-20S proteasome complex, via the docking of the C-termini of PAN into the intersubunit pockets in the alpha-rings, triggers opening of the gate for substrate entry. Interconversion between the open-gate and close-gate conformations leads to a dynamic regulation of the 20S proteasome proteolysis activity. Its function is as follows. Component of the proteasome core, a large protease complex with broad specificity involved in protein degradation. This Thermococcus onnurineus (strain NA1) protein is Proteasome subunit beta 2.